The primary structure comprises 241 residues: Small ribosomal subunit protein uS2 (241 aa).

Belongs to the universal ribosomal protein uS2 family.

The chain is Small ribosomal subunit protein uS2 from Enterobacter sp. (strain 638).